Consider the following 159-residue polypeptide: Large ribosomal subunit protein uL11 (159 aa).

Belongs to the universal ribosomal protein uL11 family. As to quaternary structure, part of the ribosomal stalk of the 50S ribosomal subunit. Interacts with L10 and the large rRNA to form the base of the stalk. L10 forms an elongated spine to which L12 dimers bind in a sequential fashion forming a multimeric L10(L12)X complex.

In terms of biological role, forms part of the ribosomal stalk which helps the ribosome interact with GTP-bound translation factors. This chain is Large ribosomal subunit protein uL11, found in Methanococcus maripaludis (strain DSM 14266 / JCM 13030 / NBRC 101832 / S2 / LL).